Reading from the N-terminus, the 624-residue chain is Interleukin-1 receptor-associated kinase-like 2 (624 aa).

Positions 13-94 constitute a Death domain; it reads LDDLCRNIDT…RAAQIVLSWK (82 aa). Positions 210–475 constitute a Protein kinase domain; sequence FDQSHRISEG…LPEACAETWA (266 aa). ATP is bound by residues 216-224, Lys237, and 337-340; these read ISEGTFADI and KSAN. Disordered regions lie at residues 508–536 and 549–593; these read SLPW…NSSL and RVSS…ETSW. A compositionally biased stretch (polar residues) spans 558 to 577; sequence GNGTAQPSTSGRQEADSSSE.

This sequence belongs to the protein kinase superfamily. TKL Ser/Thr protein kinase family. Pelle subfamily. As to quaternary structure, interacts with MYD88. IL-1 stimulation leads to the formation of a signaling complex which dissociates from the IL-1 receptor following the binding of PELI1.

Binds to the IL-1 type I receptor following IL-1 engagement, triggering intracellular signaling cascades leading to transcriptional up-regulation and mRNA stabilization. The chain is Interleukin-1 receptor-associated kinase-like 2 (Irak2) from Rattus norvegicus (Rat).